A 536-amino-acid polypeptide reads, in one-letter code: MSDYENDDECWSTLESFRVKLISVIDPSRITPYLRQCKVLNPDDEEQVLSDPNLVIRKRKVGVLLDILQRTGHKGYVAFLESLELYYPQLYRKVTGKEPARVFSMIIDASGESGLTQLLMTEVMKLQKKVQDLTALLSSKDDFIKELRVKDSLLRKHQERVQRLKEECELSSAELKRCKDENYELAMCLAHLSEEKGAALMRNRDLQLEVDRLRHSLMKAEDDCKVERKHTLKLRHAMEQRPSQELLWELQQEKDLLQARVQELQVSVQEGKLDRNSPYIQVLEEDWRQALQEHQKQVSTIFSLRKDLRQAETLRARCTEEKEMFELQCLALRKDAKMYKDRIEAILLQMEEVSIERDQAMASREELHAQCTQSFQDKDKLRKLVRELGEKADELQLQLFQTESRLLAAEGRLKQQQLDMLILSSDLEDSSPRNSQELSLPQDLEEDAQLSDKGVLADRESPEQPFMALNKEHLSLTHGMGPSSSEPPEKERRRLKESFENYRRKRALRKMQNSWRQGEGDRGNTTGSDNTDTEGS.

Ser-2 bears the Phosphoserine mark. Positions 3, 10, and 73 each coordinate Zn(2+). The CARD domain occupies 6 to 98 (NDDECWSTLE…QLYRKVTGKE (93 aa)). The tract at residues 99-116 (PARVFSMIIDASGESGLT) is linker. Positions 117–272 (QLLMTEVMKL…ELQVSVQEGK (156 aa)) form a coiled coil. Lys-125 is covalently cross-linked (Glycyl lysine isopeptide (Lys-Gly) (interchain with G-Cter in ubiquitin)). Thr-231 carries the post-translational modification Phosphothreonine; by PKC/PRKCD. Ser-277 carries the phosphoserine modification. Positions 303-415 (SLRKDLRQAE…LLAAEGRLKQ (113 aa)) form a coiled coil. Phosphoserine occurs at positions 424, 425, 431, 451, 461, 483, and 498. The segment at 425-451 (SDLEDSSPRNSQELSLPQDLEEDAQLS) is disordered. Residues 476–536 (LTHGMGPSSS…GSDNTDTEGS (61 aa)) are disordered. Positions 487 to 502 (PPEKERRRLKESFENY) are enriched in basic and acidic residues. A phosphothreonine; by CK2 mark is found at Thr-531 and Thr-533.

Monomer. Homodimer; homodimerization is mediated by the CARD domain which forms an extensive interaction with the adjacent linker and coiled-coil regions; leads to an autoinhibited state. Homomultimer; polymerizes following activation, forming a nucleating helical template that seeds BCL10-filament formation via a CARD-CARD interaction. Interacts (via CARD domain) with BCL10 (via CARD domain); interaction takes place following CARD9 activation and polymerization, leading to the formation of a filamentous CBM complex assembly. Component of a CBM complex (CARD9-BCL10, MALT1), composed of CARD9, BCL10 and MALT1. Interacts with RASGRF1. Interacts with NOD2 (via NACHT domain); interaction is direct. Interacts with RIPK2. Interacts with VHL; without leading to protein degradation. In terms of processing, phosphorylated at Thr-231 by PRKCD downstream of C-type lectin receptors activation: phosphorylation promotes interaction with BCL10, followed by activation of NF-kappa-B and MAP kinase p38 pathways. Phosphorylated at Thr-531 and Thr-531 by CK2 following interaction with VHL, leading to inhibit the ability to activate NF-kappa-B. Ubiquitinated at Lys-125 via 'Lys-27'-linked ubiquitin by TRIM62 downstream of C-type lectin receptors activation; leading to CARD9 activation, followed by activation of NF-kappa-B and MAP kinase p38 pathways. Deubiquitinated at Lys-125 by USP15, inhibiting CARD9. As to expression, specifically expressed in myeloid cells. Not expressed in non-lymphoid organs.

Its subcellular location is the cytoplasm. Its activity is regulated as follows. Maintained in an autoinhibited state via homodimerization in which the CARD domain forms an extensive interaction with the adjacent linker and coiled-coil regions. Activation downstream of C-type lectin receptors, by phosphorylation by PRKCD and/or ubiquitination by TRIM62, triggers disruption of the CARD domain-coiled coil interface, CARD9 homooligomerization and BCL10 recruitment, followed by activation of NF-kappa-B and MAP kinase p38 pathways. Zinc-binding inhibits activation by stabilizing the CARD ground-state conformation and restricting its capacity to form BCL10-nucleating filaments. Adapter protein that plays a key role in innate immune response against fungi by forming signaling complexes downstream of C-type lectin receptors. CARD9-mediated signals are essential for antifungal immunity against a subset of fungi from the phylum Ascomycota. Transduces signals in myeloid cells downstream of C-type lectin receptors CLEC7A (dectin-1), CLEC6A (dectin-2) and CLEC4E (Mincle), which detect pathogen-associated molecular pattern metabolites (PAMPs), such as fungal carbohydrates, and trigger CARD9 activation. Upon activation, CARD9 homooligomerizes to form a nucleating helical template that recruits BCL10 via CARD-CARD interaction, thereby promoting polymerization of BCL10 and subsequent recruitment of MALT1: this leads to activation of NF-kappa-B and MAP kinase p38 (MAPK11, MAPK12, MAPK13 and/or MAPK14) pathways which stimulate expression of genes encoding pro-inflammatory cytokines and chemokines. CARD9 signaling in antigen-presenting cells links innate sensing of fungi to the activation of adaptive immunity and provides a cytokine milieu that induces the development and subsequent of interleukin 17-producing T helper (Th17) cells. Also involved in activation of myeloid cells via classical ITAM-associated receptors and TLR: required for TLR-mediated activation of MAPK, while it is not required for TLR-induced activation of NF-kappa-B. CARD9 can also be engaged independently of BCL10: forms a complex with RASGRF1 downstream of C-type lectin receptors, which recruits and activates HRAS, leading to ERK activation and the production of cytokines. Acts as an important regulator of the intestinal commensal fungi (mycobiota) component of the gut microbiota. Plays an essential role in antifungal immunity against dissemination of gut fungi: acts by promoting induction of antifungal IgG antibodies response in CX3CR1(+) macrophages to confer protection against disseminated C.albicans or C.auris infection. Also mediates immunity against other pathogens, such as certain bacteria, viruses and parasites; CARD9 signaling is however redundant with other innate immune responses. In response to L.monocytogenes infection, required for the production of inflammatory cytokines activated by intracellular peptidoglycan: acts by connecting NOD2 recognition of peptidoglycan to downstream activation of MAP kinases (MAPK) without activating NF-kappa-B. The polypeptide is Caspase recruitment domain-containing protein 9 (Mus musculus (Mouse)).